A 251-amino-acid polypeptide reads, in one-letter code: Insulin-induced gene 1 protein (251 aa).

The Cytoplasmic segment spans residues 1–58 (MQTLEEHCWSCSCTRGRDKKGTRLSTWLAQRAAKAMSSLNSLLSLAYHTLASSEGRSL). Residues 59-81 (IRRSLVLFAVGVFLALVLNLLQI) traverse the membrane as a helical segment. The Extracellular segment spans residues 82–100 (QRNVTLFPEEVIATIFSSA). A helical transmembrane segment spans residues 101–118 (WWVPPCCGTAAAVVGLLY). Residues 119-133 (PCIDSHLGEPHKFKR) lie on the Cytoplasmic side of the membrane. Residues 134 to 156 (EWASVMRCIAVFVGINHASAKLD) traverse the membrane as a helical segment. The Extracellular portion of the chain corresponds to 157-159 (FAN). A helical membrane pass occupies residues 160–178 (NVQLSLTLAALSLGLWWTF). Residues 179-183 (DRSRS) are Cytoplasmic-facing. The helical transmembrane segment at 184–205 (GLGLGITIAFLATLITQFLVYN) threads the bilayer. Residues 206 to 219 (GVYQYTSPDFLYIR) lie on the Extracellular side of the membrane. Residues 220-237 (SWLPCIFFSGGVTVGNIG) traverse the membrane as a helical segment. The Cytoplasmic portion of the chain corresponds to 238-251 (RQLAMGSSEKTHSD). A KxHxx motif is present at residues 245 to 251 (SEKTHSD).

This sequence belongs to the INSIG family. Interacts with scap; interaction is direct and only takes place in the presence of sterols; it prevents interaction between scap and the coat protein complex II (COPII). Associates with the SCAP-SREBP complex; association is mediated via its interaction with scap and only takes place in the presence of sterols.

The protein resides in the endoplasmic reticulum membrane. Oxysterol-binding protein that mediates feedback control of cholesterol synthesis by controlling both endoplasmic reticulum to Golgi transport of scap and degradation of hmgcr. Acts as a negative regulator of cholesterol biosynthesis by mediating the retention of the SCAP-SREBP complex in the endoplasmic reticulum, thereby blocking the processing of sterol regulatory element-binding proteins (SREBPs). Binds oxysterol, including 25-hydroxycholesterol, regulating interaction with scap and retention of the SCAP-SREBP complex in the endoplasmic reticulum. In presence of oxysterol, interacts with scap, retaining the SCAP-SREBP complex in the endoplasmic reticulum, thereby preventing scap from escorting SREBPs to the Golgi. Sterol deprivation reduces oxysterol-binding, disrupting the interaction between insig1 and scap, thereby promoting Golgi transport of the SCAP-SREBP complex, followed by processing and nuclear translocation of SREBPs. Also regulates cholesterol synthesis by regulating degradation of hmgcr. This is Insulin-induced gene 1 protein from Xenopus tropicalis (Western clawed frog).